We begin with the raw amino-acid sequence, 254 residues long: Thiazole synthase (254 aa).

Lys95 functions as the Schiff-base intermediate with DXP in the catalytic mechanism. Residues Gly156, 182–183 (AG), and 204–205 (NT) contribute to the 1-deoxy-D-xylulose 5-phosphate site.

This sequence belongs to the ThiG family. In terms of assembly, homotetramer. Forms heterodimers with either ThiH or ThiS.

It is found in the cytoplasm. The enzyme catalyses [ThiS sulfur-carrier protein]-C-terminal-Gly-aminoethanethioate + 2-iminoacetate + 1-deoxy-D-xylulose 5-phosphate = [ThiS sulfur-carrier protein]-C-terminal Gly-Gly + 2-[(2R,5Z)-2-carboxy-4-methylthiazol-5(2H)-ylidene]ethyl phosphate + 2 H2O + H(+). Its pathway is cofactor biosynthesis; thiamine diphosphate biosynthesis. Catalyzes the rearrangement of 1-deoxy-D-xylulose 5-phosphate (DXP) to produce the thiazole phosphate moiety of thiamine. Sulfur is provided by the thiocarboxylate moiety of the carrier protein ThiS. In vitro, sulfur can be provided by H(2)S. The chain is Thiazole synthase from Shewanella sediminis (strain HAW-EB3).